The chain runs to 336 residues: Serpentine receptor class delta-51 (336 aa).

7 consecutive transmembrane segments (helical) span residues 14-34 (VYYS…LFIM), 48-68 (YLFN…FAQC), 93-113 (CFVT…SILL), 133-153 (ATTF…QLLT), 188-208 (AAII…LIAF), 237-257 (GLLI…SYFL), and 275-295 (IFGS…VLPY).

This sequence belongs to the nematode receptor-like protein srd family.

It is found in the membrane. This Caenorhabditis elegans protein is Serpentine receptor class delta-51 (srd-51).